Reading from the N-terminus, the 527-residue chain is Probable bifunctional tRNA threonylcarbamoyladenosine biosynthesis protein (527 aa).

The kae1 stretch occupies residues 1–324 (MIVLGLEGTA…YRIDEVDAPW (324 aa)). Residues histidine 107, histidine 111, and tyrosine 128 each coordinate Fe cation. Residues 128-132 (YVSGG), aspartate 160, glycine 173, glutamate 177, and asparagine 257 each bind L-threonylcarbamoyladenylate. Fe cation is bound at residue aspartate 285. Positions 330–527 (VKYRDAGAES…EDIRRRHRYV (198 aa)) constitute a Protein kinase domain. ATP contacts are provided by residues 333 to 341 (RDAGAESRI) and lysine 354. The active-site Proton acceptor; for kinase activity is aspartate 445.

In the N-terminal section; belongs to the KAE1 / TsaD family. This sequence in the C-terminal section; belongs to the protein kinase superfamily. Tyr protein kinase family. BUD32 subfamily. Component of the KEOPS complex that consists of Kae1, Bud32, Cgi121 and Pcc1; the whole complex dimerizes. Requires Fe(2+) as cofactor.

The protein localises to the cytoplasm. The enzyme catalyses L-seryl-[protein] + ATP = O-phospho-L-seryl-[protein] + ADP + H(+). It carries out the reaction L-threonyl-[protein] + ATP = O-phospho-L-threonyl-[protein] + ADP + H(+). The catalysed reaction is L-threonylcarbamoyladenylate + adenosine(37) in tRNA = N(6)-L-threonylcarbamoyladenosine(37) in tRNA + AMP + H(+). Its function is as follows. Required for the formation of a threonylcarbamoyl group on adenosine at position 37 (t(6)A37) in tRNAs that read codons beginning with adenine. Is a component of the KEOPS complex that is probably involved in the transfer of the threonylcarbamoyl moiety of threonylcarbamoyl-AMP (TC-AMP) to the N6 group of A37. The Kae1 domain likely plays a direct catalytic role in this reaction. The Bud32 domain probably displays kinase activity that regulates Kae1 function. The chain is Probable bifunctional tRNA threonylcarbamoyladenosine biosynthesis protein from Thermoplasma volcanium (strain ATCC 51530 / DSM 4299 / JCM 9571 / NBRC 15438 / GSS1).